Reading from the N-terminus, the 443-residue chain is Thymidine phosphorylase (443 aa).

This sequence belongs to the thymidine/pyrimidine-nucleoside phosphorylase family. Homodimer.

It catalyses the reaction thymidine + phosphate = 2-deoxy-alpha-D-ribose 1-phosphate + thymine. It participates in pyrimidine metabolism; dTMP biosynthesis via salvage pathway; dTMP from thymine: step 1/2. Functionally, the enzymes which catalyze the reversible phosphorolysis of pyrimidine nucleosides are involved in the degradation of these compounds and in their utilization as carbon and energy sources, or in the rescue of pyrimidine bases for nucleotide synthesis. This chain is Thymidine phosphorylase, found in Shewanella woodyi (strain ATCC 51908 / MS32).